The following is a 565-amino-acid chain: Anaphase-promoting complex subunit 7 (565 aa).

TPR repeat units lie at residues 101 to 134 (EIEV…RQRT), 169 to 202 (LDAI…LDWL), 203 to 236 (SVWI…LRDN), 237 to 270 (VDLL…DPYL), 339 to 372 (VQAL…APCR), 373 to 406 (LDCY…LGAN), 407 to 439 (AQTL…AQRP), 442 to 474 (VKAV…NQSD), 475 to 508 (CVLH…DPND), and 509 to 531 (QKSL…TQEE). K229 carries the post-translational modification N6-acetyllysine. Over residues 513 to 523 (EGMQKMEKEES) the composition is skewed to basic and acidic residues. The segment at 513-565 (EGMQKMEKEESPTDATQEEDVDDMEGSGEEGDLEGSDSEAAQWADQEQWFGMQ) is disordered. The span at 528-549 (TQEEDVDDMEGSGEEGDLEGSD) shows a compositional bias: acidic residues.

Belongs to the APC7 family. V-shaped homodimer. The mammalian APC/C is composed at least of 14 distinct subunits ANAPC1, ANAPC2, CDC27/APC3, ANAPC4, ANAPC5, CDC16/APC6, ANAPC7, CDC23/APC8, ANAPC10, ANAPC11, CDC26/APC12, ANAPC13, ANAPC15 and ANAPC16 that assemble into a complex of at least 19 chains with a combined molecular mass of around 1.2 MDa; APC/C interacts with FZR1 and FBXO5.

Its subcellular location is the cytoplasm. It localises to the cytoskeleton. The protein localises to the nucleus. It is found in the spindle. Its pathway is protein modification; protein ubiquitination. Component of the anaphase promoting complex/cyclosome (APC/C), a cell cycle-regulated E3 ubiquitin ligase that controls progression through mitosis and the G1 phase of the cell cycle. The APC/C complex acts by mediating ubiquitination and subsequent degradation of target proteins: it mainly mediates the formation of 'Lys-11'-linked polyubiquitin chains and, to a lower extent, the formation of 'Lys-48'- and 'Lys-63'-linked polyubiquitin chains. The APC/C complex catalyzes assembly of branched 'Lys-11'-/'Lys-48'-linked branched ubiquitin chains on target proteins. APC7 is not required for the assembly of the APC/C complex, but has an enzyme-substrate adapter activity mediating the processive ubiquitination of specific substrates. Involved in brain development through the specific ubiquitination and clearance of MKI67 from constitutive heterochromatin after neuronal progenitors exit mitosis. The protein is Anaphase-promoting complex subunit 7 (Anapc7) of Mus musculus (Mouse).